Consider the following 96-residue polypeptide: Dynein light chain roadblock-type 2 (96 aa).

Ala-2 is modified (N-acetylalanine).

Belongs to the GAMAD family. In terms of assembly, homodimer. The cytoplasmic dynein 1 complex consists of two catalytic heavy chains (HCs) and a number of non-catalytic subunits presented by intermediate chains (ICs), light intermediate chains (LICs) and light chains (LCs); the composition seems to vary in respect to the IC, LIC and LC composition. The heavy chain homodimer serves as a scaffold for the probable homodimeric assembly of the respective non-catalytic subunits. The ICs and LICs bind directly to the HC dimer and the LCs assemble on the IC dimer. Interacts with DYNC1I1 and DYNC1I2. Self-associates. Interacts with DYNLRB1. In terms of tissue distribution, high expression in heart, brain, placenta, skeletal muscle, prostate and small intestine; moderate in kidney, pancreas, spleen, testis, ovary and colon; low in lung, liver, thymus and leukocyte.

The protein resides in the cytoplasm. The protein localises to the cytoskeleton. Functionally, acts as one of several non-catalytic accessory components of the cytoplasmic dynein 1 complex that are thought to be involved in linking dynein to cargos and to adapter proteins that regulate dynein function. Cytoplasmic dynein 1 acts as a motor for the intracellular retrograde motility of vesicles and organelles along microtubules. This Homo sapiens (Human) protein is Dynein light chain roadblock-type 2 (DYNLRB2).